The chain runs to 273 residues: Putative pyruvate, phosphate dikinase regulatory protein 2 (273 aa).

An ADP-binding site is contributed by 151–158 (GISRTSKT).

The protein belongs to the pyruvate, phosphate/water dikinase regulatory protein family. PDRP subfamily.

The catalysed reaction is N(tele)-phospho-L-histidyl/L-threonyl-[pyruvate, phosphate dikinase] + ADP = N(tele)-phospho-L-histidyl/O-phospho-L-threonyl-[pyruvate, phosphate dikinase] + AMP + H(+). It carries out the reaction N(tele)-phospho-L-histidyl/O-phospho-L-threonyl-[pyruvate, phosphate dikinase] + phosphate + H(+) = N(tele)-phospho-L-histidyl/L-threonyl-[pyruvate, phosphate dikinase] + diphosphate. In terms of biological role, bifunctional serine/threonine kinase and phosphorylase involved in the regulation of the pyruvate, phosphate dikinase (PPDK) by catalyzing its phosphorylation/dephosphorylation. The chain is Putative pyruvate, phosphate dikinase regulatory protein 2 from Staphylococcus saprophyticus subsp. saprophyticus (strain ATCC 15305 / DSM 20229 / NCIMB 8711 / NCTC 7292 / S-41).